The primary structure comprises 204 residues: High frequency lysogenization protein HflD homolog (204 aa).

This sequence belongs to the HflD family.

It is found in the cytoplasm. The protein localises to the cell inner membrane. The polypeptide is High frequency lysogenization protein HflD homolog (Ruthia magnifica subsp. Calyptogena magnifica).